Reading from the N-terminus, the 979-residue chain is UPF0182 protein Mb0065 (979 aa).

7 helical membrane passes run 19-41, 63-85, 114-136, 174-196, 208-230, 261-280, and 285-307; these read LVTAGMGMLALLLFGPRLVDIYV, LAIVAAVALVVAGIVLAALLLAY, LFGWGIAVTLGVVCGLIASFDWV, WLFVAVVLAFLASLLTHYLFGGL, AARVQLAVFAGAVVLLKAVAYWL, LVLVAIAVLCAVSFFTAIFL, and IPAMAAALLVLSAILVGGLWPLL. The segment at 898 to 948 is disordered; it reads GTGRVATAPGGDAASAPPPGAGGPAPPQAVPPPRTTQPPAAPPRGPDVPPA. Low complexity predominate over residues 902-912; that stretch reads VATAPGGDAAS. The segment covering 913-946 has biased composition (pro residues); sequence APPPGAGGPAPPQAVPPPRTTQPPAAPPRGPDVP.

It belongs to the UPF0182 family.

Its subcellular location is the cell membrane. In Mycobacterium bovis (strain ATCC BAA-935 / AF2122/97), this protein is UPF0182 protein Mb0065.